The chain runs to 101 residues: Therostasin (101 aa).

An N-terminal signal peptide occupies residues 1–19 (MRGLAVLLLVACFCSVAFG). Antistasin-like domains are found at residues 21-46 (CENT…TCLC) and 49-75 (CNDA…FCTC).

As to expression, salivary glands.

The protein resides in the secreted. In terms of biological role, potent inhibitor of factor Xa. It also inhibits trypsin in a weaker manner. The protein is Therostasin of Theromyzon tessulatum (Duck leech).